We begin with the raw amino-acid sequence, 219 residues long: Large ribosomal subunit protein uL1 (219 aa).

Belongs to the universal ribosomal protein uL1 family. In terms of assembly, part of the 50S ribosomal subunit.

Its function is as follows. Binds directly to 23S rRNA. Probably involved in E site tRNA release. Functionally, protein L1 is also a translational repressor protein, it controls the translation of its operon by binding to its mRNA. This chain is Large ribosomal subunit protein uL1, found in Pyrococcus abyssi (strain GE5 / Orsay).